The sequence spans 134 residues: Ribosome-binding factor A (134 aa).

Belongs to the RbfA family. In terms of assembly, monomer. Binds 30S ribosomal subunits, but not 50S ribosomal subunits or 70S ribosomes.

Its subcellular location is the cytoplasm. One of several proteins that assist in the late maturation steps of the functional core of the 30S ribosomal subunit. Associates with free 30S ribosomal subunits (but not with 30S subunits that are part of 70S ribosomes or polysomes). Required for efficient processing of 16S rRNA. May interact with the 5'-terminal helix region of 16S rRNA. The protein is Ribosome-binding factor A of Psychrobacter arcticus (strain DSM 17307 / VKM B-2377 / 273-4).